The following is a 261-amino-acid chain: Putative outer membrane protein CT_371 (261 aa).

Positions 1 to 18 (MRLCFILFLLLSPLISEA) are cleaved as a signal peptide.

The protein resides in the cell outer membrane. The chain is Putative outer membrane protein CT_371 from Chlamydia trachomatis serovar D (strain ATCC VR-885 / DSM 19411 / UW-3/Cx).